The chain runs to 118 residues: Large ribosomal subunit protein bL19 (118 aa).

The protein belongs to the bacterial ribosomal protein bL19 family.

Functionally, this protein is located at the 30S-50S ribosomal subunit interface and may play a role in the structure and function of the aminoacyl-tRNA binding site. The protein is Large ribosomal subunit protein bL19 of Buchnera aphidicola subsp. Baizongia pistaciae (strain Bp).